The primary structure comprises 1022 residues: Protein translocase subunit SecA (1022 aa).

Residues Gln143, 161–165, and Asp661 each bind ATP; that span reads GEGKT. The disordered stretch occupies residues 973–1001; the sequence is AGSILSHESDVPSGTAAQQPIKADVKPGR. Cys1005, Cys1007, Cys1016, and His1017 together coordinate Zn(2+).

Belongs to the SecA family. Monomer and homodimer. Part of the essential Sec protein translocation apparatus which comprises SecA, SecYEG and auxiliary proteins SecDF. Other proteins may also be involved. It depends on Zn(2+) as a cofactor.

The protein localises to the cell inner membrane. Its subcellular location is the cytoplasm. The catalysed reaction is ATP + H2O + cellular proteinSide 1 = ADP + phosphate + cellular proteinSide 2.. Its function is as follows. Part of the Sec protein translocase complex. Interacts with the SecYEG preprotein conducting channel. Has a central role in coupling the hydrolysis of ATP to the transfer of proteins into and across the cell membrane, serving as an ATP-driven molecular motor driving the stepwise translocation of polypeptide chains across the membrane. The sequence is that of Protein translocase subunit SecA from Chlorobium phaeobacteroides (strain DSM 266 / SMG 266 / 2430).